Consider the following 507-residue polypeptide: Maturase K (507 aa).

It belongs to the intron maturase 2 family. MatK subfamily.

The protein resides in the plastid. Its subcellular location is the chloroplast. Usually encoded in the trnK tRNA gene intron. Probably assists in splicing its own and other chloroplast group II introns. The polypeptide is Maturase K (Liriodendron chinense (Chinese tulip tree)).